The sequence spans 603 residues: Aspartate--tRNA(Asp/Asn) ligase (603 aa).

Residues 205–208 form an aspartate region; that stretch reads QLFK. Arg-227 contributes to the L-aspartate binding site. Residues 227–229 and Gln-236 each bind ATP; that span reads RDE. His-463 contributes to the L-aspartate binding site. Glu-497 contributes to the ATP binding site. Residue Arg-504 participates in L-aspartate binding. ATP is bound at residue 549–552; that stretch reads GMDR.

This sequence belongs to the class-II aminoacyl-tRNA synthetase family. Type 1 subfamily. As to quaternary structure, homodimer.

The protein resides in the cytoplasm. The enzyme catalyses tRNA(Asx) + L-aspartate + ATP = L-aspartyl-tRNA(Asx) + AMP + diphosphate. Its function is as follows. Aspartyl-tRNA synthetase with relaxed tRNA specificity since it is able to aspartylate not only its cognate tRNA(Asp) but also tRNA(Asn). Reaction proceeds in two steps: L-aspartate is first activated by ATP to form Asp-AMP and then transferred to the acceptor end of tRNA(Asp/Asn). The protein is Aspartate--tRNA(Asp/Asn) ligase of Anaeromyxobacter dehalogenans (strain 2CP-C).